Consider the following 238-residue polypeptide: uncharacterized protein (238 aa).

Transmembrane regions (helical) follow at residues 22–42, 49–69, 78–98, 105–125, 141–161, 166–186, and 208–228; these read VYGW…GLYA, LFSL…YIQA, AVMG…GTMV, FGGG…GLSA, ILML…VVSL, PLMY…LTVV, and LSLI…WYLL.

The protein belongs to the BI1 family.

It localises to the cell membrane. This is an uncharacterized protein from Chlamydia muridarum (strain MoPn / Nigg).